Here is a 456-residue protein sequence, read N- to C-terminus: Alcohol acyltransferase 17 (456 aa).

Active-site proton acceptor residues include histidine 166 and aspartate 382.

Belongs to the plant acyltransferase family. Expressed in fruit.

Functionally, involved in the biosynthesis of volatile esters which confer kiwifruit flavor. Alcohol acyl transferase that can use a wide range of alcohols as substrate to produce esters. The sequence is that of Alcohol acyltransferase 17 from Actinidia deliciosa (Kiwi).